The chain runs to 678 residues: DNA ligase (678 aa).

Residues 36 to 40, 85 to 86, and Glu117 each bind NAD(+); these read DVVYD and SL. Residue Lys119 is the N6-AMP-lysine intermediate of the active site. Residues Arg140, Glu177, Lys294, and Lys318 each contribute to the NAD(+) site. Cys412, Cys415, Cys430, and Cys435 together coordinate Zn(2+). Residues 598 to 678 form the BRCT domain; it reads ISSTPLAGKT…QLLKMINPQE (81 aa).

It belongs to the NAD-dependent DNA ligase family. LigA subfamily. Mg(2+) is required as a cofactor. It depends on Mn(2+) as a cofactor.

It carries out the reaction NAD(+) + (deoxyribonucleotide)n-3'-hydroxyl + 5'-phospho-(deoxyribonucleotide)m = (deoxyribonucleotide)n+m + AMP + beta-nicotinamide D-nucleotide.. DNA ligase that catalyzes the formation of phosphodiester linkages between 5'-phosphoryl and 3'-hydroxyl groups in double-stranded DNA using NAD as a coenzyme and as the energy source for the reaction. It is essential for DNA replication and repair of damaged DNA. This chain is DNA ligase, found in Gloeothece citriformis (strain PCC 7424) (Cyanothece sp. (strain PCC 7424)).